A 346-amino-acid chain; its full sequence is Probable galacturonosyltransferase-like 6 (346 aa).

The chain crosses the membrane as a helical; Signal-anchor for type II membrane protein span at residues 1–21 (MLWITRFAGLFSAAMAVIVLS). Topologically, residues 22-346 (PSLQSFPPAA…TPYDLYRHSH (325 aa)) are lumenal. A glycan (N-linked (GlcNAc...) asparagine) is linked at asparagine 203.

It belongs to the glycosyltransferase 8 family.

Its subcellular location is the golgi apparatus membrane. It functions in the pathway glycan metabolism; pectin biosynthesis. Its function is as follows. May be involved in pectin and/or xylans biosynthesis in cell walls. The chain is Probable galacturonosyltransferase-like 6 (GATL6) from Arabidopsis thaliana (Mouse-ear cress).